The sequence spans 409 residues: Multifunctional CCA protein (409 aa).

ATP-binding residues include glycine 8 and arginine 11. CTP contacts are provided by glycine 8 and arginine 11. 2 residues coordinate Mg(2+): glutamate 21 and aspartate 23. Residues arginine 91, arginine 137, and arginine 140 each contribute to the ATP site. The CTP site is built by arginine 91, arginine 137, and arginine 140. The HD domain occupies 228 to 329 (TGVHTLMVLT…LKALEGLDAF (102 aa)).

Belongs to the tRNA nucleotidyltransferase/poly(A) polymerase family. Bacterial CCA-adding enzyme type 1 subfamily. As to quaternary structure, monomer. Can also form homodimers and oligomers. Requires Mg(2+) as cofactor. Ni(2+) serves as cofactor.

It catalyses the reaction a tRNA precursor + 2 CTP + ATP = a tRNA with a 3' CCA end + 3 diphosphate. The enzyme catalyses a tRNA with a 3' CCA end + 2 CTP + ATP = a tRNA with a 3' CCACCA end + 3 diphosphate. Catalyzes the addition and repair of the essential 3'-terminal CCA sequence in tRNAs without using a nucleic acid template. Adds these three nucleotides in the order of C, C, and A to the tRNA nucleotide-73, using CTP and ATP as substrates and producing inorganic pyrophosphate. tRNA 3'-terminal CCA addition is required both for tRNA processing and repair. Also involved in tRNA surveillance by mediating tandem CCA addition to generate a CCACCA at the 3' terminus of unstable tRNAs. While stable tRNAs receive only 3'-terminal CCA, unstable tRNAs are marked with CCACCA and rapidly degraded. This chain is Multifunctional CCA protein, found in Thioalkalivibrio sulfidiphilus (strain HL-EbGR7).